We begin with the raw amino-acid sequence, 589 residues long: Aspartate--tRNA ligase (589 aa).

Glutamate 172 serves as a coordination point for L-aspartate. An aspartate region spans residues 196–199 (QLFK). Residue arginine 218 coordinates L-aspartate. Residues 218–220 (RDE) and glutamine 227 contribute to the ATP site. Residue histidine 449 coordinates L-aspartate. Glutamate 483 contacts ATP. Arginine 490 is an L-aspartate binding site. 535 to 538 (GLDR) lines the ATP pocket.

This sequence belongs to the class-II aminoacyl-tRNA synthetase family. Type 1 subfamily. As to quaternary structure, homodimer.

The protein resides in the cytoplasm. The enzyme catalyses tRNA(Asp) + L-aspartate + ATP = L-aspartyl-tRNA(Asp) + AMP + diphosphate. Its function is as follows. Catalyzes the attachment of L-aspartate to tRNA(Asp) in a two-step reaction: L-aspartate is first activated by ATP to form Asp-AMP and then transferred to the acceptor end of tRNA(Asp). In Haemophilus ducreyi (strain 35000HP / ATCC 700724), this protein is Aspartate--tRNA ligase.